Consider the following 176-residue polypeptide: 3-hydroxyanthranilate 3,4-dioxygenase (176 aa).

Residue Arg44 coordinates O2. Fe cation contacts are provided by His48, Glu54, and His92. Glu54 is a substrate binding site. Arg96 and Glu106 together coordinate substrate. Fe cation-binding residues include Cys121, Cys124, Cys158, and Cys161.

This sequence belongs to the 3-HAO family. In terms of assembly, homodimer. Requires Fe(2+) as cofactor.

It catalyses the reaction 3-hydroxyanthranilate + O2 = (2Z,4Z)-2-amino-3-carboxymuconate 6-semialdehyde. It functions in the pathway cofactor biosynthesis; NAD(+) biosynthesis; quinolinate from L-kynurenine: step 3/3. Functionally, catalyzes the oxidative ring opening of 3-hydroxyanthranilate to 2-amino-3-carboxymuconate semialdehyde, which spontaneously cyclizes to quinolinate. The protein is 3-hydroxyanthranilate 3,4-dioxygenase of Xanthomonas oryzae pv. oryzae (strain MAFF 311018).